A 75-amino-acid chain; its full sequence is Alpha-elapitoxin-Bc2a (75 aa).

Residues 1-2 (YT) form the signal peptide. 5 cysteine pairs are disulfide-bonded: Cys5–Cys24, Cys17–Cys45, Cys30–Cys34, Cys49–Cys60, and Cys61–Cys66.

This sequence belongs to the three-finger toxin family. Long-chain subfamily. Type II alpha-neurotoxin sub-subfamily. As to quaternary structure, monomer in solution, homodimer in crystal state. As to expression, expressed by the venom gland.

It is found in the secreted. Binds to muscular and neuronal nicotinic acetylcholine receptor (nAChR) and inhibits acetylcholine from binding to the receptor, thereby impairing neuromuscular and neuronal transmission. Reversibly blocks chick and mouse muscle nicotinic acetylcholine receptors. Blocks muscle type nAChR with an IC(50)=30 nM, when heterologously expressed in oocytes. Also binds with high affinity to alpha-7/CHRNA7 nAChRs. In addition, shows a weak inhibition of neuronal alpha-3-beta-2/CHRNA3-CHRNB2 nAChR (IC(50)=2.9 uM). Selectively binds to alpha-1-delta subunit interface of the mouse muscle nicotinic acetylcholine receptor, with a 10-fold higher affinity for the adult than for the fetal receptors. In vivo, when intraperitoneally injected into mice, causes flaccid paralysis and respiratory distress, followed by death within 2-4 hours. The sequence is that of Alpha-elapitoxin-Bc2a from Bungarus candidus (Malayan krait).